The sequence spans 191 residues: Molybdenum cofactor guanylyltransferase (191 aa).

Residues 11 to 13, Lys23, Asp66, and Asp97 each bind GTP; that span reads LCG. Asp97 contacts Mg(2+).

It belongs to the MobA family. In terms of assembly, monomer. The cofactor is Mg(2+).

The protein localises to the cytoplasm. The enzyme catalyses Mo-molybdopterin + GTP + H(+) = Mo-molybdopterin guanine dinucleotide + diphosphate. Its function is as follows. Transfers a GMP moiety from GTP to Mo-molybdopterin (Mo-MPT) cofactor (Moco or molybdenum cofactor) to form Mo-molybdopterin guanine dinucleotide (Mo-MGD) cofactor. The protein is Molybdenum cofactor guanylyltransferase of Campylobacter jejuni subsp. doylei (strain ATCC BAA-1458 / RM4099 / 269.97).